Consider the following 967-residue polypeptide: MNNIKKDSQKDRPTYKDTLNLLQTNFGMRANATLREPELQAFWREKNIDFELGLNNSGETFTLHDGPPYANGTLHMGHALNKVLKDIINKFQTMKGKKVCYVPGWDCHGLPIELKVLQAMDKSQRAELTPIKLRKKAAAYAKKQVSQQMDGFKRWGVWGDWDQPYLSLDKKFEASQIKLFGEMVFKGYIYRGLKPVHWSPSSQTALAEAELEYPTGHTSKSIYVGFKVNQIPKRLTQEISKQAPDLINSEGKLKELKLVIWTTTPWTIPANEAISVNQKLEYVIAQSSDRSLIIIANDLLQEVSKSVGINYEKRVLIKGSILDGIIYKHPLFDKISPVVLGGDYITTESGTGLVHTAPGHGVDDFNTAKKYNLSISCPVDEKGFLTKEAGKFEGLNVLKDANSVIISDLINAGSLLKEIPYEHRYPYDWRTKKPTIFRATEQWFASVEGFRDKALSAIEDVIWLPESGKNRINSMVRERGDWCISRQRTWGVPIPVFYEKNGQEILLNKETISHIADLFSVHGADIWWEYEVSELLPPSYLNQADRWQKGTDTMDVWFDSGSSWSSVISKKENLNYPADLYLEGSDQHRGWFQSSLLTSVAVNEHAPFKKVLTHGFALDENGRKMSKSLGNIIDPLVIINGGSNKKLDPAYGADVLRLWVSSVDYSADVPIGSNILKQISDVYRKVRNTSRYLLGNLYDFDYKIDSIDIANLPLLDKWMLNRTAEVIDEISDAYNNFEFSKFFQTIQNFCVVDLSNFYLDIAKDRLYVSSKSDFRRRSCQTVLSLVIEKISGLIAPVLCHMAEDIWQNIPYDLEEASVFQRGWPNVPKSWKNSSFNCHVTELRKLRAVINRMLESCRNNQALGSSLEASVRVDISDEKVKAAIEWLAESESNNVDVLRDWFLVSSLQIGGEPWAEVLVSEDNDYASVEIAKARGFKCERCWHYEIEMSKNPQHTNICKRCEKVVLAI.

The 'HIGH' region motif lies at 68-78; the sequence is PYANGTLHMGH. Glu583 contacts L-isoleucyl-5'-AMP. The short motif at 624–628 is the 'KMSKS' region element; that stretch reads KMSKS. ATP is bound at residue Lys627. Positions 937, 940, 957, and 960 each coordinate Zn(2+).

It belongs to the class-I aminoacyl-tRNA synthetase family. IleS type 1 subfamily. Monomer. Requires Zn(2+) as cofactor.

It is found in the cytoplasm. The enzyme catalyses tRNA(Ile) + L-isoleucine + ATP = L-isoleucyl-tRNA(Ile) + AMP + diphosphate. Its function is as follows. Catalyzes the attachment of isoleucine to tRNA(Ile). As IleRS can inadvertently accommodate and process structurally similar amino acids such as valine, to avoid such errors it has two additional distinct tRNA(Ile)-dependent editing activities. One activity is designated as 'pretransfer' editing and involves the hydrolysis of activated Val-AMP. The other activity is designated 'posttransfer' editing and involves deacylation of mischarged Val-tRNA(Ile). The sequence is that of Isoleucine--tRNA ligase from Prochlorococcus marinus (strain NATL2A).